We begin with the raw amino-acid sequence, 468 residues long: Na(+)/H(+) antiporter NhaA 2 (468 aa).

Transmembrane regions (helical) follow at residues 31–51 (FLHV…VALA), 82–102 (LHFW…GLEI), 118–138 (VLPV…YLAL), 147–167 (GWGV…ALLG), 176–196 (VLLL…IAVF), 199–219 (SSIS…VLAL), 226–246 (SPVV…SAGV), 321–341 (PWVA…VSLG), 353–373 (LLLG…MVAC), 393–413 (VLVV…VAGL), and 422–442 (GVAK…AMAV).

This sequence belongs to the NhaA Na(+)/H(+) (TC 2.A.33) antiporter family.

The protein localises to the cell inner membrane. The enzyme catalyses Na(+)(in) + 2 H(+)(out) = Na(+)(out) + 2 H(+)(in). In terms of biological role, na(+)/H(+) antiporter that extrudes sodium in exchange for external protons. The chain is Na(+)/H(+) antiporter NhaA 2 from Sorangium cellulosum (strain So ce56) (Polyangium cellulosum (strain So ce56)).